The following is a 113-amino-acid chain: Endoribonuclease SymE (113 aa).

The 46-residue stretch at 29 to 74 (GRYPDYSRIPAITLKGQWLEVAGFATGTAVDVKVMEGCIVLTAQPP) folds into the SpoVT-AbrB domain.

The protein belongs to the SymE family.

The protein resides in the cytoplasm. Its function is as follows. Involved in the degradation and recycling of damaged RNA. It is itself a target for degradation by the ATP-dependent protease Lon. In Escherichia coli O7:K1 (strain IAI39 / ExPEC), this protein is Endoribonuclease SymE.